Reading from the N-terminus, the 240-residue chain is Protein shisa-5 (240 aa).

Residues 1–28 (MTAPVPAPRILLPLLLLLLLTPPPGARG) form the signal peptide. The Extracellular portion of the chain corresponds to 29 to 105 (EVCMASRGLS…RPGYNDPMSG (77 aa)). Residues 106–126 (FGATLAVGLTIFVLSVVTIII) traverse the membrane as a helical segment. Residues 127 to 240 (CFTCSCCCLY…AYMDAPKAAL (114 aa)) are Cytoplasmic-facing.

The protein belongs to the shisa family. Interacts with PDCD6; PDCD6 can stabilize SHISA5.

It localises to the endoplasmic reticulum membrane. Its subcellular location is the nucleus membrane. Functionally, can induce apoptosis in a caspase-dependent manner and plays a role in p53/TP53-dependent apoptosis. This is Protein shisa-5 (SHISA5) from Homo sapiens (Human).